A 334-amino-acid chain; its full sequence is Protein-methionine-sulfoxide reductase catalytic subunit MsrP (334 aa).

The segment at residues 1–44 (MKKVSRLTEADVTAESAFFMQRRQVLKALGITTAALSLPTAAHA) is a signal peptide (tat-type signal). Mo-molybdopterin is bound by residues N88, 91-92 (YE), C146, T181, N233, R238, and 249-251 (GIK).

Belongs to the MsrP family. As to quaternary structure, heterodimer of a catalytic subunit (MsrP) and a heme-binding subunit (MsrQ). Mo-molybdopterin serves as cofactor. Post-translationally, predicted to be exported by the Tat system. The position of the signal peptide cleavage has not been experimentally proven.

The protein localises to the periplasm. The catalysed reaction is L-methionyl-[protein] + a quinone + H2O = L-methionyl-(S)-S-oxide-[protein] + a quinol. It carries out the reaction L-methionyl-[protein] + a quinone + H2O = L-methionyl-(R)-S-oxide-[protein] + a quinol. In terms of biological role, part of the MsrPQ system that repairs oxidized periplasmic proteins containing methionine sulfoxide residues (Met-O), using respiratory chain electrons. Thus protects these proteins from oxidative-stress damage caused by reactive species of oxygen and chlorine generated by the host defense mechanisms. MsrPQ is essential for the maintenance of envelope integrity under bleach stress, rescuing a wide series of structurally unrelated periplasmic proteins from methionine oxidation. The catalytic subunit MsrP is non-stereospecific, being able to reduce both (R-) and (S-) diastereoisomers of methionine sulfoxide. The polypeptide is Protein-methionine-sulfoxide reductase catalytic subunit MsrP (Cronobacter sakazakii (strain ATCC BAA-894) (Enterobacter sakazakii)).